The following is a 112-amino-acid chain: Large ribosomal subunit protein P1 (112 aa).

Residues 80–112 (AAAAPAAESKKEEKKKEEESDQSDDDMGFGLFD) form a disordered region. A compositionally biased stretch (basic and acidic residues) spans 87-97 (ESKKEEKKKEE). 2 positions are modified to phosphoserine: serine 99 and serine 102.

Belongs to the eukaryotic ribosomal protein P1/P2 family. In terms of assembly, P1 and P2 exist as dimers at the large ribosomal subunit.

In terms of biological role, plays an important role in the elongation step of protein synthesis. The polypeptide is Large ribosomal subunit protein P1 (RpLP1) (Drosophila melanogaster (Fruit fly)).